Consider the following 726-residue polypeptide: Putative RNA polymerase II subunit B1 CTD phosphatase RPAP2 homolog (726 aa).

An RTR1-type zinc finger spans residues Ala-43–Ser-131. 4 residues coordinate Zn(2+): Cys-66, Cys-71, Cys-107, and Cys-111. Residues Val-209–Gln-218 show a composition bias toward basic and acidic residues. 2 disordered regions span residues Val-209–Ser-242 and Lys-294–Gly-323. The segment covering Asp-220–Glu-241 has biased composition (polar residues).

This sequence belongs to the RPAP2 family.

It is found in the nucleus. The enzyme catalyses O-phospho-L-seryl-[protein] + H2O = L-seryl-[protein] + phosphate. The catalysed reaction is O-phospho-L-threonyl-[protein] + H2O = L-threonyl-[protein] + phosphate. Functionally, putative RNA polymerase II subunit B1 C-terminal domain (CTD) phosphatase involved in RNA polymerase II transcription regulation. This chain is Putative RNA polymerase II subunit B1 CTD phosphatase RPAP2 homolog, found in Oryza sativa subsp. japonica (Rice).